The following is a 214-amino-acid chain: Probable chemoreceptor glutamine deamidase CheD (214 aa).

It belongs to the CheD family.

The catalysed reaction is L-glutaminyl-[protein] + H2O = L-glutamyl-[protein] + NH4(+). Functionally, probably deamidates glutamine residues to glutamate on methyl-accepting chemotaxis receptors (MCPs), playing an important role in chemotaxis. This is Probable chemoreceptor glutamine deamidase CheD from Vibrio vulnificus (strain CMCP6).